A 333-amino-acid chain; its full sequence is 1,5-anhydro-D-fructose reductase (333 aa).

NADP(+)-binding positions include 9 to 12 (ASTI), 33 to 34 (ST), R38, 71 to 76 (TTNELH), 93 to 94 (EK), N120, 162 to 163 (WR), and Y283.

Monomer.

The catalysed reaction is 1,5-anhydro-D-mannitol + NADP(+) = 1,5-anhydro-D-fructose + NADPH + H(+). Functionally, catalyzes the NADPH-specific reduction of 1,5-anhydro-D-fructose to 1,5-anhydro-D-mannitol. Also shows some activity against structurally related compounds such as 3-keto-1,5-anhydro-D-fructose, D-glucosone and D-xylosone. The enzyme cannot use NADH as cosubstrate. This Ensifer adhaerens (Sinorhizobium morelense) protein is 1,5-anhydro-D-fructose reductase (afr).